The following is a 149-amino-acid chain: Oocyte-expressed protein (149 aa).

The region spanning 49 to 110 is the KH; atypical domain; sequence PLVFYLEAWL…RVQNRVKSVL (62 aa).

It belongs to the KHDC1 family. In terms of assembly, component of the subcortical maternal complex (SCMC), at least composed of NLRP5, KHDC3, OOEP, and TLE6. Within the complex, interacts with NLRP5, KHDC3 and TLE6. As part of the SCMC interacts with the SCMC-associated protein NLRP4F. The SCMC may facilitate translocation of its components between the nuclear and cytoplasmic compartments. Forms a scaffold complex with KHDC3/FILIA, and interacts with BLM and TRIM25 at DNA replication forks.

Its subcellular location is the cytoplasm. It is found in the nucleus. Component of the subcortical maternal complex (SCMC), a multiprotein complex that plays a key role in early embryonic development. The SCMC complex is a structural constituent of cytoplasmic lattices, which consist in fibrous structures found in the cytoplasm of oocytes and preimplantation embryos. They are required to store maternal proteins critical for embryonic development, such as proteins that control epigenetic reprogramming of the preimplantation embryo, and prevent their degradation or activation. As part of the OOEP-KHDC3 scaffold, recruits BLM and TRIM25 to DNA replication forks, thereby promoting the ubiquitination of BLM by TRIM25, enhancing BLM retainment at replication forks and therefore promoting stalled replication fork restart. Positively regulates the homologous recombination-mediated DNA double-strand break (DSB) repair pathway by regulating ATM activation and RAD51 recruitment to DSBs in oocytes. Thereby contributes to oocyte survival and the resumption and completion of meiosis. This is Oocyte-expressed protein (OOEP) from Canis lupus familiaris (Dog).